We begin with the raw amino-acid sequence, 152 residues long: Cornifin-A (152 aa).

Residues 20 to 40 (EVKQPCQPPPQEPCAPKTKEP) are disordered. 14 repeat units span residues 27-34 (PPPQEPCA), 35-42 (PKTKEPCH), 43-49 (PIPEPCN), 50-57 (PKVPEPCQ), 58-65 (PKVPEPCQ), 66-73 (PKVPEPCQ), 74-81 (PKVPEPCQ), 82-89 (PKVPEPCQ), 90-97 (PKVPEPCQ), 98-105 (PKVPEPCH), 106-113 (PKAPEPCH), 114-121 (PVVPEPCQ), 122-129 (PVAPEPCQ), and 130-137 (PVVPEPCP). The segment at 27-137 (PPPQEPCAPK…CQPVVPEPCP (111 aa)) is 14 X 8 AA approximate tandem repeats.

Belongs to the cornifin (SPRR) family. As to expression, in squamous epithelia lining the nasal vestibule and in the hard palate.

It is found in the cytoplasm. Its function is as follows. Cross-linked envelope protein of keratinocytes. It is a keratinocyte protein that first appears in the cell cytosol, but ultimately becomes cross-linked to membrane proteins by transglutaminase. All that results in the formation of an insoluble envelope beneath the plasma membrane. In Rattus norvegicus (Rat), this protein is Cornifin-A (Sprr1a).